The following is a 177-amino-acid chain: Secretion monitor (177 aa).

The first 37 residues, 1-37 (MIGILNRWRQFGRRYFWPHLLLGMVAASLGVPSNLSG), serve as a signal peptide directing secretion.

The protein belongs to the SecM family.

It is found in the cytoplasm. The protein resides in the cytosol. The protein localises to the periplasm. Its function is as follows. Regulates secA expression by translational coupling of the secM secA operon. Translational pausing at a specific Pro residue 5 residues before the end of the protein may allow disruption of a mRNA repressor helix that normally suppresses secA translation initiation. This Yersinia pseudotuberculosis serotype O:1b (strain IP 31758) protein is Secretion monitor.